The following is a 612-amino-acid chain: Methionine--tRNA ligase (612 aa).

Residues 12–22 carry the 'HIGH' region motif; sequence PYANGPRHIGH. Zn(2+) contacts are provided by Cys144, Cys147, Cys157, and Cys160. The 'KMSKS' region signature appears at 350 to 354; sequence KFSSS. Ser353 provides a ligand contact to ATP. The interval 580 to 612 is disordered; that stretch reads IQPGTQLSKPKPLFPKLDPELAETGPEWAPVQK.

This sequence belongs to the class-I aminoacyl-tRNA synthetase family. MetG type 1 subfamily. In terms of assembly, monomer. It depends on Zn(2+) as a cofactor.

The protein resides in the cytoplasm. It catalyses the reaction tRNA(Met) + L-methionine + ATP = L-methionyl-tRNA(Met) + AMP + diphosphate. Functionally, is required not only for elongation of protein synthesis but also for the initiation of all mRNA translation through initiator tRNA(fMet) aminoacylation. The chain is Methionine--tRNA ligase from Corynebacterium jeikeium (strain K411).